A 362-amino-acid chain; its full sequence is UPF0324 membrane protein YPO1307/y2878/YP_1285 (362 aa).

The next 9 membrane-spanning stretches (helical) occupy residues 21 to 38, 48 to 70, 102 to 124, 139 to 161, 168 to 190, 240 to 257, 278 to 300, 305 to 327, and 334 to 356; these read YIPG…ALNV, GLGA…YPWL, VADV…FILA, VMLI…EPVL, VAVA…PWLY, MIRV…SAYL, WFAV…AVWV, TLDT…IGSI, and PLLL…NLFV.

This sequence belongs to the UPF0324 family.

The protein localises to the cell membrane. The polypeptide is UPF0324 membrane protein YPO1307/y2878/YP_1285 (Yersinia pestis).